We begin with the raw amino-acid sequence, 81 residues long: MTDLFSSPDHTLDALGLRCPEPVMMVRKTVRNMQPGETLLIIADDPATTRDIPGFCTFMEHELVAKETDELPYRYLIRKSG.

Cys-19 (cysteine persulfide intermediate) is an active-site residue.

Belongs to the sulfur carrier protein TusA family. Interacts with IscS.

The protein resides in the cytoplasm. It functions in the pathway tRNA modification. Functionally, sulfur carrier protein involved in sulfur trafficking in the cell. Part of a sulfur-relay system required for 2-thiolation during synthesis of 2-thiouridine of the modified wobble base 5-methylaminomethyl-2-thiouridine (mnm(5)s(2)U) in tRNA. Interacts with IscS and stimulates its cysteine desulfurase activity. Accepts an activated sulfur from IscS, which is then transferred to TusD, and thus determines the direction of sulfur flow from IscS to 2-thiouridine formation. Also appears to be involved in sulfur transfer for the biosynthesis of molybdopterin. The polypeptide is Sulfur carrier protein TusA (Escherichia coli O17:K52:H18 (strain UMN026 / ExPEC)).